The following is a 266-amino-acid chain: MMDESADIKPVPTSEDVAAPSGTEPVAPAPKKKRARTSTKAIMAAIEQRLGHTFADISLLTTAFTHVSALKSSRGRCDSYQRLEFLGDHVLGLVVSDMLYRAFPKADEGELSKRLADLVRKETCIDVAKSLDLQEGVKLGAVGAGAGARLRRSVLGDICEAVIGAVYLDGGYAAAAAFVERNWLERMRKPVRPLRDPKTVLQEWAQGKGLPTPVYREVERTGPHHDPRFRVAVELPGLESSEGIGGSKRAAEKAAASAMIVREGVK.

Positions 1-35 (MMDESADIKPVPTSEDVAAPSGTEPVAPAPKKKRA) are disordered. Residues 43-171 (MAAIEQRLGH…VIGAVYLDGG (129 aa)) enclose the RNase III domain. Glu-84 is a binding site for Mg(2+). Asp-88 is a catalytic residue. Asp-157 and Glu-160 together coordinate Mg(2+). The active site involves Glu-160. Positions 196-265 (DPKTVLQEWA…ASAMIVREGV (70 aa)) constitute a DRBM domain.

It belongs to the ribonuclease III family. Homodimer. The cofactor is Mg(2+).

The protein resides in the cytoplasm. It carries out the reaction Endonucleolytic cleavage to 5'-phosphomonoester.. Functionally, digests double-stranded RNA. Involved in the processing of primary rRNA transcript to yield the immediate precursors to the large and small rRNAs (23S and 16S). Processes some mRNAs, and tRNAs when they are encoded in the rRNA operon. Processes pre-crRNA and tracrRNA of type II CRISPR loci if present in the organism. The protein is Ribonuclease 3 of Nitrobacter winogradskyi (strain ATCC 25391 / DSM 10237 / CIP 104748 / NCIMB 11846 / Nb-255).